Reading from the N-terminus, the 276-residue chain is Dermonecrotic toxin LdSicTox-alphaIB2 (276 aa).

Histidine 5 is an active-site residue. Residues glutamate 25 and aspartate 27 each coordinate Mg(2+). The active-site Nucleophile is histidine 41. Cystine bridges form between cysteine 45–cysteine 51 and cysteine 47–cysteine 190. Aspartate 85 lines the Mg(2+) pocket. A glycan (N-linked (GlcNAc...) asparagine) is linked at asparagine 253.

This sequence belongs to the arthropod phospholipase D family. Class II subfamily. Mg(2+) serves as cofactor. As to expression, expressed by the venom gland.

The protein localises to the secreted. The enzyme catalyses an N-(acyl)-sphingosylphosphocholine = an N-(acyl)-sphingosyl-1,3-cyclic phosphate + choline. It carries out the reaction an N-(acyl)-sphingosylphosphoethanolamine = an N-(acyl)-sphingosyl-1,3-cyclic phosphate + ethanolamine. The catalysed reaction is a 1-acyl-sn-glycero-3-phosphocholine = a 1-acyl-sn-glycero-2,3-cyclic phosphate + choline. It catalyses the reaction a 1-acyl-sn-glycero-3-phosphoethanolamine = a 1-acyl-sn-glycero-2,3-cyclic phosphate + ethanolamine. Functionally, dermonecrotic toxins cleave the phosphodiester linkage between the phosphate and headgroup of certain phospholipids (sphingolipid and lysolipid substrates), forming an alcohol (often choline) and a cyclic phosphate. This toxin acts on sphingomyelin (SM). It may also act on ceramide phosphoethanolamine (CPE), lysophosphatidylcholine (LPC) and lysophosphatidylethanolamine (LPE), but not on lysophosphatidylserine (LPS), and lysophosphatidylglycerol (LPG). It acts by transphosphatidylation, releasing exclusively cyclic phosphate products as second products. Induces dermonecrosis, hemolysis, increased vascular permeability, edema, inflammatory response, and platelet aggregation. This Loxosceles deserta (Desert recluse spider) protein is Dermonecrotic toxin LdSicTox-alphaIB2.